A 543-amino-acid chain; its full sequence is Hydroxylamine reductase (543 aa).

Residues Cys-5, Cys-8, Cys-17, and Cys-23 each coordinate [4Fe-4S] cluster. Hybrid [4Fe-2O-2S] cluster contacts are provided by His-250, Glu-274, Cys-318, Cys-410, Cys-438, Cys-463, Glu-498, and Lys-500. Cysteine persulfide is present on Cys-410.

This sequence belongs to the HCP family. It depends on [4Fe-4S] cluster as a cofactor. Requires hybrid [4Fe-2O-2S] cluster as cofactor.

It is found in the cytoplasm. The enzyme catalyses A + NH4(+) + H2O = hydroxylamine + AH2 + H(+). Functionally, catalyzes the reduction of hydroxylamine to form NH(3) and H(2)O. This is Hydroxylamine reductase from Petrotoga mobilis (strain DSM 10674 / SJ95).